The chain runs to 304 residues: Quinolinate synthase (304 aa).

The iminosuccinate site is built by His-24 and Ser-41. Cys-86 is a binding site for [4Fe-4S] cluster. Residues 112–114 (YVN) and Ser-129 contribute to the iminosuccinate site. Residue Cys-171 coordinates [4Fe-4S] cluster. Iminosuccinate is bound by residues 197-199 (HPE) and Thr-214. Cys-259 lines the [4Fe-4S] cluster pocket.

The protein belongs to the quinolinate synthase family. Type 2 subfamily. Requires [4Fe-4S] cluster as cofactor.

The protein resides in the cytoplasm. It catalyses the reaction iminosuccinate + dihydroxyacetone phosphate = quinolinate + phosphate + 2 H2O + H(+). Its pathway is cofactor biosynthesis; NAD(+) biosynthesis; quinolinate from iminoaspartate: step 1/1. Catalyzes the condensation of iminoaspartate with dihydroxyacetone phosphate to form quinolinate. This Geobacter sp. (strain M21) protein is Quinolinate synthase.